The chain runs to 287 residues: Lipoyl synthase (287 aa).

7 residues coordinate [4Fe-4S] cluster: cysteine 34, cysteine 39, cysteine 45, cysteine 60, cysteine 64, cysteine 67, and serine 273. The Radical SAM core domain occupies 46-262; sequence WNKRHATVMI…KYIAYSKGFL (217 aa).

It belongs to the radical SAM superfamily. Lipoyl synthase family. Requires [4Fe-4S] cluster as cofactor.

The protein localises to the cytoplasm. It carries out the reaction [[Fe-S] cluster scaffold protein carrying a second [4Fe-4S](2+) cluster] + N(6)-octanoyl-L-lysyl-[protein] + 2 oxidized [2Fe-2S]-[ferredoxin] + 2 S-adenosyl-L-methionine + 4 H(+) = [[Fe-S] cluster scaffold protein] + N(6)-[(R)-dihydrolipoyl]-L-lysyl-[protein] + 4 Fe(3+) + 2 hydrogen sulfide + 2 5'-deoxyadenosine + 2 L-methionine + 2 reduced [2Fe-2S]-[ferredoxin]. It functions in the pathway protein modification; protein lipoylation via endogenous pathway; protein N(6)-(lipoyl)lysine from octanoyl-[acyl-carrier-protein]: step 2/2. Catalyzes the radical-mediated insertion of two sulfur atoms into the C-6 and C-8 positions of the octanoyl moiety bound to the lipoyl domains of lipoate-dependent enzymes, thereby converting the octanoylated domains into lipoylated derivatives. This Wolbachia sp. subsp. Drosophila simulans (strain wRi) protein is Lipoyl synthase.